A 255-amino-acid polypeptide reads, in one-letter code: tRNA (guanine-N(7)-)-methyltransferase (255 aa).

The segment at 1 to 30 (MMHDDPNEAGLPPDDAALPDEAADGADEVN) is disordered. Acidic residues predominate over residues 17-27 (ALPDEAADGAD). S-adenosyl-L-methionine contacts are provided by E86, E111, D138, and D161. Residue D161 is part of the active site. Substrate contacts are provided by residues K165, D197, and 232-235 (TKFE).

The protein belongs to the class I-like SAM-binding methyltransferase superfamily. TrmB family.

The enzyme catalyses guanosine(46) in tRNA + S-adenosyl-L-methionine = N(7)-methylguanosine(46) in tRNA + S-adenosyl-L-homocysteine. It participates in tRNA modification; N(7)-methylguanine-tRNA biosynthesis. Its function is as follows. Catalyzes the formation of N(7)-methylguanine at position 46 (m7G46) in tRNA. This chain is tRNA (guanine-N(7)-)-methyltransferase, found in Burkholderia vietnamiensis (strain G4 / LMG 22486) (Burkholderia cepacia (strain R1808)).